A 346-amino-acid polypeptide reads, in one-letter code: Uroporphyrinogen decarboxylase (346 aa).

Residues 26–30 (RQAGR), D76, Y153, S208, and H323 contribute to the substrate site.

The protein belongs to the uroporphyrinogen decarboxylase family. Homodimer.

The protein localises to the cytoplasm. The enzyme catalyses uroporphyrinogen III + 4 H(+) = coproporphyrinogen III + 4 CO2. It participates in porphyrin-containing compound metabolism; protoporphyrin-IX biosynthesis; coproporphyrinogen-III from 5-aminolevulinate: step 4/4. Catalyzes the decarboxylation of four acetate groups of uroporphyrinogen-III to yield coproporphyrinogen-III. The protein is Uroporphyrinogen decarboxylase of Prochlorococcus marinus (strain MIT 9215).